The sequence spans 267 residues: LysM and putative peptidoglycan-binding domain-containing protein 4 (267 aa).

Topologically, residues 1 to 211 are extracellular; the sequence is MRRGDPPPRA…RSNGADWGIQ (211 aa). Residues 30 to 64 form a disordered region; the sequence is HRQEEPEASSEDEELNVMELRPRSRDSSSKEKEGV. Residues 35-45 show a composition bias toward acidic residues; the sequence is PEASSEDEELN. The span at 49-64 shows a compositional bias: basic and acidic residues; sequence LRPRSRDSSSKEKEGV. A LysM domain is found at 70–114; that stretch reads LERDISHEDNLSKLALQYGCKVADIKRVNNLFQEQDMYALKSIKI. Residue Asn79 is glycosylated (N-linked (GlcNAc...) asparagine). The disordered stretch occupies residues 130 to 152; it reads RTPQQRPSHDAAPSNSAMASVSG. Over residues 142-152 the composition is skewed to polar residues; that stretch reads PSNSAMASVSG. Residues 212–232 traverse the membrane as a helical segment; sequence WWNAVIAMLLIGIVLPIFYVV. The Cytoplasmic segment spans residues 233 to 267; the sequence is YYKTKDSGESAVDNVGVNISVSTSNSTREYNGKSP.

Its subcellular location is the membrane. In Danio rerio (Zebrafish), this protein is LysM and putative peptidoglycan-binding domain-containing protein 4 (lysmd4).